We begin with the raw amino-acid sequence, 305 residues long: Protoheme IX farnesyltransferase (305 aa).

9 helical membrane-spanning segments follow: residues 38 to 58 (FITTFTGMWLAFYFTGMSFLG), 60 to 80 (LDIVLLTMIGSSLIIAGSCAI), 110 to 130 (AYAFGILLVVLGLIMLLMTTV), 131 to 151 (TSAVIGFIGVFTYAVLYTMWS), 161 to 181 (IGSVSGAVPPLIGWTAVTGTI), 185 to 205 (AWVLFMIMFIWQIPHFLSLAI), 227 to 247 (VTKRQIIIWTACLLPLPFFLG), 249 to 269 (LGWPIVALGTLLNIGWLVIGL), and 285 to 305 (FVYSLNYLTIFFVAMIIITLF).

The protein belongs to the UbiA prenyltransferase family. Protoheme IX farnesyltransferase subfamily. In terms of assembly, interacts with CtaA.

It localises to the cell membrane. The enzyme catalyses heme b + (2E,6E)-farnesyl diphosphate + H2O = Fe(II)-heme o + diphosphate. It functions in the pathway porphyrin-containing compound metabolism; heme O biosynthesis; heme O from protoheme: step 1/1. Its function is as follows. Converts heme B (protoheme IX) to heme O by substitution of the vinyl group on carbon 2 of heme B porphyrin ring with a hydroxyethyl farnesyl side group. The chain is Protoheme IX farnesyltransferase from Bacillus pumilus (strain SAFR-032).